The following is a 214-amino-acid chain: Large ribosomal subunit protein uL16 (214 aa).

At R32 the chain carries Citrulline. A Glycyl lysine isopeptide (Lys-Gly) (interchain with G-Cter in SUMO2) cross-link involves residue K175. K188 is covalently cross-linked (Glycyl lysine isopeptide (Lys-Gly) (interchain with G-Cter in ubiquitin)).

It belongs to the universal ribosomal protein uL16 family. In terms of assembly, component of the large ribosomal subunit. Mature ribosomes consist of a small (40S) and a large (60S) subunit. The 40S subunit contains about 33 different proteins and 1 molecule of RNA (18S). The 60S subunit contains about 49 different proteins and 3 molecules of RNA (28S, 5.8S and 5S). Post-translationally, citrullinated by PADI4. Ufmylated by UFL1.

It is found in the cytoplasm. Functionally, component of the large ribosomal subunit. Plays a role in the formation of actively translating ribosomes. May play a role in the embryonic brain development. The protein is Large ribosomal subunit protein uL16 of Homo sapiens (Human).